Here is a 287-residue protein sequence, read N- to C-terminus: Membrane protein insertase YidC 2 (287 aa).

Residues 1–26 form the signal peptide; that stretch reads MKKKKRFKQKLLIASLVIGLMAVLSG. Residue Cys27 is the site of N-palmitoyl cysteine attachment. Residue Cys27 is the site of S-diacylglycerol cysteine attachment. Transmembrane regions (helical) follow at residues 65-85, 135-155, 178-198, 207-224, and 228-250; these read YAVG…PLMI, MMGC…YQAI, YILP…SMMG, AMIV…GITL, and LALY…NNPF.

This sequence belongs to the OXA1/ALB3/YidC family. Type 2 subfamily.

The protein resides in the cell membrane. Required for the insertion and/or proper folding and/or complex formation of integral membrane proteins into the membrane. Involved in integration of membrane proteins that insert both dependently and independently of the Sec translocase complex, as well as at least some lipoproteins. The sequence is that of Membrane protein insertase YidC 2 from Listeria monocytogenes serovar 1/2a (strain ATCC BAA-679 / EGD-e).